The sequence spans 423 residues: SH2 domain-containing protein 5 (423 aa).

Residues 28–146 (AQYVGLLPCG…LLCRSFQLAY (119 aa)) enclose the PID domain. The region spanning 296–392 (WAFAGISRPC…LDMGRLNPTY (97 aa)) is the SH2 domain. The tract at residues 394 to 423 (EQDCGPLGRPPRTLRPLSHAKSEAELQGLG) is disordered. Residues 398–410 (GPLGRPPRTLRPL) are compositionally biased toward low complexity.

Interacts with BCR.

It is found in the postsynaptic density. May be involved in synaptic plasticity regulation through the control of Rac-GTP levels. The sequence is that of SH2 domain-containing protein 5 from Pongo abelii (Sumatran orangutan).